Here is a 360-residue protein sequence, read N- to C-terminus: Phospho-N-acetylmuramoyl-pentapeptide-transferase (360 aa).

10 consecutive transmembrane segments (helical) span residues 27-47 (GALF…ISLL), 70-90 (GTPT…ILLW), 98-118 (VWVT…DDYL), 134-154 (LLLE…YSPA), 168-188 (TLLN…VGAG), 199-219 (GLAI…AYLV), 239-259 (LAVV…FNAP), 263-283 (IFMG…IAVA), 288-308 (IVLA…IIQV), and 337-357 (QVVI…LATL).

The protein belongs to the glycosyltransferase 4 family. MraY subfamily. Requires Mg(2+) as cofactor.

It is found in the cell inner membrane. The enzyme catalyses UDP-N-acetyl-alpha-D-muramoyl-L-alanyl-gamma-D-glutamyl-meso-2,6-diaminopimeloyl-D-alanyl-D-alanine + di-trans,octa-cis-undecaprenyl phosphate = di-trans,octa-cis-undecaprenyl diphospho-N-acetyl-alpha-D-muramoyl-L-alanyl-D-glutamyl-meso-2,6-diaminopimeloyl-D-alanyl-D-alanine + UMP. It participates in cell wall biogenesis; peptidoglycan biosynthesis. Functionally, catalyzes the initial step of the lipid cycle reactions in the biosynthesis of the cell wall peptidoglycan: transfers peptidoglycan precursor phospho-MurNAc-pentapeptide from UDP-MurNAc-pentapeptide onto the lipid carrier undecaprenyl phosphate, yielding undecaprenyl-pyrophosphoryl-MurNAc-pentapeptide, known as lipid I. The polypeptide is Phospho-N-acetylmuramoyl-pentapeptide-transferase (Methylorubrum extorquens (strain CM4 / NCIMB 13688) (Methylobacterium extorquens)).